We begin with the raw amino-acid sequence, 337 residues long: Ribosomal RNA small subunit methyltransferase H (337 aa).

S-adenosyl-L-methionine is bound by residues 45 to 47, aspartate 64, histidine 91, aspartate 112, and glutamine 119; that span reads GGH.

Belongs to the methyltransferase superfamily. RsmH family.

The protein localises to the cytoplasm. It carries out the reaction cytidine(1402) in 16S rRNA + S-adenosyl-L-methionine = N(4)-methylcytidine(1402) in 16S rRNA + S-adenosyl-L-homocysteine + H(+). Its function is as follows. Specifically methylates the N4 position of cytidine in position 1402 (C1402) of 16S rRNA. This chain is Ribosomal RNA small subunit methyltransferase H, found in Cutibacterium acnes (strain DSM 16379 / KPA171202) (Propionibacterium acnes).